A 500-amino-acid chain; its full sequence is ERAD-associated E3 ubiquitin-protein ligase HRD1 (500 aa).

The Cytoplasmic portion of the chain corresponds to 1-3 (MIR). Residues 4–24 (LQTYAAFSLMATATAVYYAFS) traverse the membrane as a helical segment. The Lumenal segment spans residues 25-40 (SREQFYPAMVYLSTSK). The chain crosses the membrane as a helical span at residues 41–61 (ICFVLLLNTGLVAMCVAWQLV). The Cytoplasmic segment spans residues 62 to 98 (KRLFLGTLREAEVERLNEQAWREVVEILFAVTIFRQD). The helical transmembrane segment at 99-119 (FSVSFLAMVAALLLVKALHWL) threads the bilayer. The Lumenal segment spans residues 120–135 (AQKRVEYIETTPSVPM). Residues 136–156 (LSHARIVSFMLFLLVVDCLFL) form a helical membrane-spanning segment. Residues 157–170 (SNSLRSLIHKREAS) are Cytoplasmic-facing. Residues 171–191 (VAIFFSFEYMILATSTVSTFV) traverse the membrane as a helical segment. The Lumenal segment spans residues 192–225 (KYIFYVSDMLMEGQWEKKAVYTFYLELISDLVHL). Residues 226 to 246 (SLYMLFFIAIFLNYGVPLHLI) form a helical membrane-spanning segment. Residues 247–500 (RELYETFRNF…NENGEHTKSD (254 aa)) are Cytoplasmic-facing. The RING-type; atypical zinc-finger motif lies at 292–330 (CIICREEMTTAKKLLCGHLFHVHCLRSWLERQHTCPTCR). 2 disordered regions span residues 337–375 (DNGRTAARPHGVHPGVQPVPGNGTPGSERAAGENISRRQ) and 398–438 (NNLN…SAPT). Residues 348 to 358 (VHPGVQPVPGN) are compositionally biased toward low complexity. The segment covering 398 to 426 (NNLNRYSTPPQSTSNGPQSGEASTSNQSP) has biased composition (polar residues).

The protein belongs to the HRD1 family.

Its subcellular location is the endoplasmic reticulum membrane. It carries out the reaction S-ubiquitinyl-[E2 ubiquitin-conjugating enzyme]-L-cysteine + [acceptor protein]-L-lysine = [E2 ubiquitin-conjugating enzyme]-L-cysteine + N(6)-ubiquitinyl-[acceptor protein]-L-lysine.. Its pathway is protein modification; protein ubiquitination. Its function is as follows. Probable component of the HRD1 ubiquitin ligase complex that mediates the rapid degradation of misfolded endoplasmic reticulum (ER) proteins, a process called ER-associated degradation (ERAD). This chain is ERAD-associated E3 ubiquitin-protein ligase HRD1, found in Oryza sativa subsp. japonica (Rice).